The following is a 299-amino-acid chain: Zinc finger protein 414 (299 aa).

Polar residues-rich tracts occupy residues M1–G20 and D69–G81. The tract at residues M1–Q98 is disordered. 2 C2H2-type zinc fingers span residues I99 to H123 and F135 to H159. The C2H2-type 3; degenerate zinc finger occupies F166 to D190. Disordered stretches follow at residues Q193–L228 and P254–R299. A compositionally biased stretch (basic and acidic residues) spans L203 to E215. The segment covering D217 to L228 has biased composition (low complexity).

This sequence belongs to the krueppel C2H2-type zinc-finger protein family.

The protein resides in the nucleus. Its function is as follows. May be involved in transcriptional regulation. The polypeptide is Zinc finger protein 414 (Znf414) (Mus musculus (Mouse)).